The chain runs to 66 residues: Large ribosomal subunit protein bL33c (66 aa).

It belongs to the bacterial ribosomal protein bL33 family.

The protein localises to the plastid. Its subcellular location is the chloroplast. This is Large ribosomal subunit protein bL33c from Agrostis stolonifera (Creeping bentgrass).